Here is a 2640-residue protein sequence, read N- to C-terminus: MKLRLIAFVLILWTETLADQSPGPGPEYADVVFLVDSSNYLGIKSFPFVRTFLNRMISSLPIEANKYRVALAQYSDALHNEFQLGTFKNRNPMLNHLKKNFGFIGGSLKIGNALQEAHRTYFSAPTNGRDKKQFPPILVVLASAESEDDVEEAAKALREDGVKIISVGVQKASEENLKAMATSQFHFNLRTARDLGMFAPNMTRIIKDVTQYREGTTVDLITAVAPTTPAAPATPAAPTIPAALTTAANHVDKTVPFPTSCQKDSLADLIFLVDESVGTTQNLRDLQNFLENVTSSVDVKDNCMRLGLMSFSDRAQTISSLRSSANQSEFQQQIQKLSLQTGASNVGAAIEQMRKEGFSESSGSRKAQGVPQIAVLVTHRASDDMVREAALDLRLEGVTMFAMGIEGANNTQLEDIVSYPSRQSISTHSSYSHLESYSGNFLKKIRNEIWTQVSTRAEQMELDKTGCVDTKEADIYFLIDGSSSIRKKEFEQIQIFMSSVIDMFPIGPNKVRVGVVQYSHKNEVEFPVSRYTDGIDLKKAVFNIKQLKGLTFTGKALDFILPLIKKGKTERTDRAPCYLIVLTDGKSNDSVLEPANRLRAEQITIHAIGIGEANKTQLRQIAGKDERVNFGQNFDSLKSIKNEIVHRICSEKGCEDMKADIMFLVDSSGSIGPTNFETMKTFMKNLVGKIQIGADRSQVGVVQFSDYNREEFQLNKYSTHEEIYAAIDRMSPINRNTLTGGALTFVNEYFDLSKGGRPQVRKFLILLTDGKAQDEVGGPATALRSKSVTIFSVGVYGANRAQLEEISGDGSLVFHVENFDHLKAIESKLIFRVCALHDCKRIELLDIVFVLDHSGSIGPREQESMMNLTIHLVKKADVGRDRVQIGALTYSNHPEILFYLNTYSSGSAIAEHLRRPRDTGGETYTAKALQHSNVLFTEEHGSRLTQNVRQLMIVITDGVSHDRDKLDEAARELRDKGITIFAVGVGNANQDELETMAGKKENTVHVDNFDKLRDIYLPLQETLCNNSQETCNLPEADVIFLCDGSDMVSDSEFVTMTTFLSDLIDNFDIESQRMKIGMAQYGSRYQEIIELESSLNKTQWKSQVHSVAQSKGLPRLDFALKHVSDMFDPSVGGRRNAGVPQTLVVITSSSPRYDVTDAVKVLKDLGICVLALGIGDVYKEQLLPITGNSEKIITFRDFNKLKNVDVKKRMVREICQSCGKANCFVDVVVGFDISTHRQGQPLFQGHPRLESYLPGILEDITSIRGVSCGAGAEAQVSLAFKVNSDQEFPAKFQIYQKAAFDSLLHVTVRGPTHLDAPFLQSLWDMFEERSASRGQVLLIFSDGLQGESITLLERQSDRLREAGLDALLVVSLNTFGHDEFSSFEFGKGFDYRTQLTIGMLDLGKTLSQYLGNIAERACCCTFCKCPGIPGPHGTRGLQASKGSSGPKGSRGHRGEDGDPGRRGEIGLQGDRGVVGCPGTRGQKGVKGFSGAQGEHGEDGLDGLDGEEGFYGFRGGKGQKGDPGNQGYPGIRGAAGEDGEKGFPGDPGDPGKDSNIKGQKGEKGERGRQGITGQKGTHGRPSSKGSRGMEGQRGPQGPSGQAGNPGPQGTQGPEGLQGSQGSSGNRGGKGDKGSQGYQGPQGSPGPAGPRGDIGRPGFGGRKGEPGVPGGPGPVGPPGQRGKQGDYGIPGYGQTGRKGVKGPTGFPGDPGQKGDAGNPGIPGGPGPKGFKGLTLSQGLKGRSGLQGSQGPPGRRGPKGTAGQPIYSPCELIQFLRDHSLIFTDKCPVYPTELVFALDQSSGITERRFNETRDTITSIVSDLNIRENNCPVGARVAVVSYDSDTSYLIRGSDYHNKKHLLQLLSQIKYQVPRKARDIGNAMRFVARNVFKRMSAGTNTRRVAVFFSNGQAASRASILTATMELSALDISLAVFAYNERVFLDEAFGFDDTGTFQVIPVPPVGDYEPLEKLRRCTLCYDKCFPNTCAEEPFFPENSYMDVAFLLDNSKNIASDDFQAVKALVSSVIDSFHITSNPSASESGDRVALLSYSPSESSRRKGRVKTEFAFTTYDNQSIMKNYIYTSLQQLNGDATIGLALQWAMEGLFLGTPNPRKHKVIIVISAGENHEEKEFVKTVALRAKCQGYVVFVISLGSTQRDEMEELASYPLDHHLIQLGRMYKPDLNYIVKFLKPFIYSVRRGFNQYPPPTLKDDCRLVELERGDTLPHGLRLTAKLREVPESTISLADQELNAGKDSSFVLEDHRGDHLVYVPSQMLEPHKLVSHYGNDRESVAMASLTSEHESHGREELGLAHEPGDASLQEYYMDVAFLIDASQRVGGRNEFKEVRTLITSVLDYFHIAPAPLTSVLGDRVAVLTYSPPGYLPNTEECPVYLEFDLVTYNTVHQMKHHLQESLQQLNGDVFIGHALQWTVDNVFVGTPNLRKNKVIFIVTAGETNPLDKEVLRNASLRAKCQGYSIFVFSFGPIHNDMELEELASHPLDHHLVRLGRVHRPDLDYVIKFIKPFVHSIRRAINKYPGRDLQAKCDNLTFPGPENAGTEDSALLIPEVYRIEAGENELSGDSGSQEQHFFLLGNSHGNHSESTADLMRQLYLLLSSGELMVNDKEEPCSAETPAPVNSKQDGEDAR.

Residues 1 to 18 (MKLRLIAFVLILWTETLA) form the signal peptide. Positions 19–1426 (DQSPGPGPEY…ACCCTFCKCP (1408 aa)) are nonhelical region. VWFA domains lie at 30–209 (DVVF…IKDV), 268–445 (DLIF…LKKI), 474–644 (DIYF…KNEI), 660–829 (DIMF…ESKL), 846–1023 (DIVF…QETL), 1037–1214 (DVIF…VREI), and 1226–1413 (DVVV…LGNI). 3 N-linked (GlcNAc...) asparagine glycosylation sites follow: Asn201, Asn292, and Asn614. Collagen-like domains lie at 1426 to 1478 (PGIP…GCPG), 1474 to 1524 (VGCP…DPGN), 1557 to 1614 (GQKG…GPEG), 1632 to 1689 (GSQG…GIPG), and 1706 to 1762 (GDPG…AGQP). Residues 1427–1760 (GIPGPHGTRG…GRRGPKGTAG (334 aa)) form a triple-helical region region. The disordered stretch occupies residues 1435–1761 (RGLQASKGSS…RRGPKGTAGQ (327 aa)). Over residues 1452–1464 (HRGEDGDPGRRGE) the composition is skewed to basic and acidic residues. The segment covering 1537 to 1567 (DGEKGFPGDPGDPGKDSNIKGQKGEKGERGR) has biased composition (basic and acidic residues). Residues 1597-1609 (PSGQAGNPGPQGT) show a composition bias toward polar residues. The segment covering 1610-1622 (QGPEGLQGSQGSS) has biased composition (low complexity). The Cell attachment site motif lies at 1649–1651 (RGD). The span at 1718–1727 (GIPGGPGPKG) shows a compositional bias: gly residues. Residues 1740-1750 (RSGLQGSQGPP) are compositionally biased toward low complexity. The nonhelical region stretch occupies residues 1761-2640 (QPIYSPCELI…NSKQDGEDAR (880 aa)). VWFA domains lie at 1790–1970 (ELVF…KLRR) and 1996–2186 (DVAF…VKFL). 2 short sequence motifs (cell attachment site) span residues 2216–2218 (RGD) and 2259–2261 (RGD). In terms of domain architecture, VWFA 10 spans 2321 to 2516 (DVAFLIDASQ…PDLDYVIKFI (196 aa)). The N-linked (GlcNAc...) asparagine glycan is linked to Asn2541. Residues 2617–2640 (DKEEPCSAETPAPVNSKQDGEDAR) are disordered.

Belongs to the type VI collagen family. As to quaternary structure, trimers composed of three different chains: alpha-1(VI), alpha-2(VI), and alpha-3(VI) or alpha-4(VI) or alpha-5(VI) or alpha-6(VI). Prolines at the third position of the tripeptide repeating unit (G-X-Y) are hydroxylated in some or all of the chains. In newborn, it is expressed in lung, heart, kidney, muscle, brain, intestine, skin, femur, sternum and calvaria. In adult, it is widely expressed and is detected in lung, heart, kidney, spleen, muscle, ovary, uterus, brain, skin, liver and sternum.

The protein resides in the secreted. The protein localises to the extracellular space. It localises to the extracellular matrix. Functionally, collagen VI acts as a cell-binding protein. In Mus musculus (Mouse), this protein is Collagen alpha-5(VI) chain (Col6a5).